We begin with the raw amino-acid sequence, 285 residues long: Putative cuticle collagen 75 (285 aa).

Triple-helical region regions lie at residues 87–116 (GRIG…PGEL) and 133–261 (GPKG…PGLD). The segment covering 207 to 231 (PGAPGIPGEEGLSGPTGQPGSPGSI) has biased composition (low complexity). Residues 207–257 (PGAPGIPGEEGLSGPTGQPGSPGSIGAMGYEGAYGDRGEPGPPGPIGRRGG) form a disordered region.

This sequence belongs to the cuticular collagen family. As to quaternary structure, collagen polypeptide chains are complexed within the cuticle by disulfide bonds and other types of covalent cross-links.

In terms of biological role, nematode cuticles are composed largely of collagen-like proteins. The cuticle functions both as an exoskeleton and as a barrier to protect the worm from its environment. The protein is Putative cuticle collagen 75 (col-75) of Caenorhabditis elegans.